The primary structure comprises 204 residues: ATP-dependent Clp protease proteolytic subunit (204 aa).

Ser102 functions as the Nucleophile in the catalytic mechanism. Residue His127 is part of the active site.

The protein belongs to the peptidase S14 family. In terms of assembly, fourteen ClpP subunits assemble into 2 heptameric rings which stack back to back to give a disk-like structure with a central cavity, resembling the structure of eukaryotic proteasomes.

It is found in the cytoplasm. It catalyses the reaction Hydrolysis of proteins to small peptides in the presence of ATP and magnesium. alpha-casein is the usual test substrate. In the absence of ATP, only oligopeptides shorter than five residues are hydrolyzed (such as succinyl-Leu-Tyr-|-NHMec, and Leu-Tyr-Leu-|-Tyr-Trp, in which cleavage of the -Tyr-|-Leu- and -Tyr-|-Trp bonds also occurs).. Its function is as follows. Cleaves peptides in various proteins in a process that requires ATP hydrolysis. Has a chymotrypsin-like activity. Plays a major role in the degradation of misfolded proteins. The polypeptide is ATP-dependent Clp protease proteolytic subunit (Neisseria gonorrhoeae (strain ATCC 700825 / FA 1090)).